The chain runs to 256 residues: Trans-aconitate 2-methyltransferase (256 aa).

It belongs to the methyltransferase superfamily. Tam family.

It localises to the cytoplasm. It carries out the reaction trans-aconitate + S-adenosyl-L-methionine = (E)-3-(methoxycarbonyl)pent-2-enedioate + S-adenosyl-L-homocysteine. In terms of biological role, catalyzes the S-adenosylmethionine monomethyl esterification of trans-aconitate. The sequence is that of Trans-aconitate 2-methyltransferase from Rhodopseudomonas palustris (strain BisB5).